Consider the following 357-residue polypeptide: Protein pelota homolog (357 aa).

This sequence belongs to the eukaryotic release factor 1 family. Pelota subfamily. As to quaternary structure, monomer. It depends on a divalent metal cation as a cofactor.

The protein localises to the cytoplasm. May function in recognizing stalled ribosomes, interact with stem-loop structures in stalled mRNA molecules, and effect endonucleolytic cleavage of the mRNA. May play a role in the release non-functional ribosomes and degradation of damaged mRNAs. Has endoribonuclease activity. The protein is Protein pelota homolog of Thermococcus onnurineus (strain NA1).